The chain runs to 443 residues: Glucose-6-phosphate isomerase (443 aa).

E285 (proton donor) is an active-site residue. Active-site residues include H306 and K420.

It belongs to the GPI family.

Its subcellular location is the cytoplasm. It carries out the reaction alpha-D-glucose 6-phosphate = beta-D-fructose 6-phosphate. Its pathway is carbohydrate biosynthesis; gluconeogenesis. The protein operates within carbohydrate degradation; glycolysis; D-glyceraldehyde 3-phosphate and glycerone phosphate from D-glucose: step 2/4. Catalyzes the reversible isomerization of glucose-6-phosphate to fructose-6-phosphate. The polypeptide is Glucose-6-phosphate isomerase (Staphylococcus aureus (strain Mu3 / ATCC 700698)).